A 254-amino-acid chain; its full sequence is Thiazole synthase (254 aa).

Lys-95 (schiff-base intermediate with DXP) is an active-site residue. Residues Gly-156, Ala-182–Gly-183, and Asn-204–Thr-205 contribute to the 1-deoxy-D-xylulose 5-phosphate site.

The protein belongs to the ThiG family. As to quaternary structure, homotetramer. Forms heterodimers with either ThiH or ThiS.

Its subcellular location is the cytoplasm. The enzyme catalyses [ThiS sulfur-carrier protein]-C-terminal-Gly-aminoethanethioate + 2-iminoacetate + 1-deoxy-D-xylulose 5-phosphate = [ThiS sulfur-carrier protein]-C-terminal Gly-Gly + 2-[(2R,5Z)-2-carboxy-4-methylthiazol-5(2H)-ylidene]ethyl phosphate + 2 H2O + H(+). It functions in the pathway cofactor biosynthesis; thiamine diphosphate biosynthesis. Functionally, catalyzes the rearrangement of 1-deoxy-D-xylulose 5-phosphate (DXP) to produce the thiazole phosphate moiety of thiamine. Sulfur is provided by the thiocarboxylate moiety of the carrier protein ThiS. In vitro, sulfur can be provided by H(2)S. In Shewanella putrefaciens (strain CN-32 / ATCC BAA-453), this protein is Thiazole synthase.